The sequence spans 70 residues: Turripeptide Lol9.1 (70 aa).

The signal sequence occupies residues 1-20 (MKVYCLLLVLLVGLVSQAHG). Positions 21–70 (KPTKRCLSVCSAEYEPVCGSDGKTYANKCHLMTEACWSPTSITLVHEGKC) constitute a Kazal-like domain. Intrachain disulfides connect cysteine 26-cysteine 56, cysteine 30-cysteine 49, and cysteine 38-cysteine 70.

The protein belongs to the conopeptide P-like superfamily. In terms of tissue distribution, expressed by the venom duct.

Its subcellular location is the secreted. Functionally, acts as a neurotoxin by inhibiting an ion channel. May also act as a serine protease inhibitor, since it possess the kazal serine protease inhibitor signature. The chain is Turripeptide Lol9.1 from Iotyrris olangoensis (Sea snail).